The primary structure comprises 1198 residues: Structural polyprotein (1198 aa).

The interaction with host EXOC1 stretch occupies residues 2–15; that stretch reads TKKPGGPGKNRAIN. The tract at residues 37–72 is hydrophobic; homodimerization of capsid protein C; it reads LLDGRGPVRFVLALITFFKFTALAPTKALLGRWRAV. The propeptide at 106–127 is ER anchor for the capsid protein C, removed in mature form by serine protease NS3; that stretch reads GGNESSIMWLASLAIVIACAGA. A helical transmembrane segment spans residues 110-130; the sequence is SSIMWLASLAIVIACAGAMKL. Asparagine 142 is a glycosylation site (N-linked (GlcNAc...) asparagine; by host). A run of 2 helical transmembrane segments spans residues 254 to 274 and 280 to 294; these read WIIR…MLGS and VVFT…PAYS. Intrachain disulfides connect cysteine 297-cysteine 324, cysteine 354-cysteine 410, cysteine 354-cysteine 415, cysteine 368-cysteine 399, cysteine 386-cysteine 410, and cysteine 386-cysteine 415. Residues 392 to 405 are fusion peptide; that stretch reads DRGWGNGCGLFGKG. The N-linked (GlcNAc...) asparagine; by host glycan is linked to asparagine 448. Intrachain disulfides connect cysteine 484-cysteine 581 and cysteine 598-cysteine 629. Helical transmembrane passes span 747 to 767 and 774 to 794; these read FGGM…WMGV and IALA…NVHA. 6 disulfides stabilise this stretch: cysteine 798–cysteine 809, cysteine 849–cysteine 937, cysteine 973–cysteine 1017, cysteine 1074–cysteine 1123, cysteine 1085–cysteine 1106, and cysteine 1107–cysteine 1110. N-linked (GlcNAc...) asparagine; by host glycans are attached at residues asparagine 924 and asparagine 1001. Residues 1151-1178 form a disordered region; sequence MIDPFSAGPSGDVSGHPGGPSQEVDGQI.

As to quaternary structure, homodimer. Interacts (via N-terminus) with host EXOC1 (via C-terminus); this interaction results in EXOC1 degradation through the proteasome degradation pathway. Interacts with host CAPRIN1; this interaction is involved in the suppression of the integrated stress response. In terms of assembly, forms heterodimers with envelope protein E in the endoplasmic reticulum and Golgi. Homodimer; in the endoplasmic reticulum and Golgi. Interacts with protein prM. Interacts with non-structural protein 1. In terms of processing, genome polyprotein: Specific enzymatic cleavages in vivo yield mature proteins. Cleavages in the lumen of endoplasmic reticulum are performed by host signal peptidase, whereas cleavages in the cytoplasmic side are performed by serine protease NS3. Signal cleavage at the 2K-4B site requires a prior NS3 protease-mediated cleavage at the 4A-2K site. Post-translationally, cleaved in post-Golgi vesicles by a host furin, releasing the mature small envelope protein M, and peptide pr. This cleavage is incomplete as up to 30% of viral particles still carry uncleaved prM. N-glycosylated.

It localises to the secreted. It is found in the virion membrane. The protein resides in the host endoplasmic reticulum membrane. In terms of biological role, plays a role in virus budding by binding to the cell membrane and gathering the viral RNA into a nucleocapsid that forms the core of a mature virus particle. During virus entry, may induce genome penetration into the host cytoplasm after hemifusion induced by the surface proteins. Can migrate to the cell nucleus where it modulates host functions. Overcomes the anti-viral effects of host EXOC1 by sequestering and degrading the latter through the proteasome degradation pathway. Inhibits the integrated stress response (ISR) in the infected cell by binding to host CAPRIN1. Functionally, inhibits RNA silencing by interfering with host Dicer. Prevents premature fusion activity of envelope proteins in trans-Golgi by binding to envelope protein E at pH6.0. After virion release in extracellular space, gets dissociated from E dimers. Its function is as follows. Acts as a chaperone for envelope protein E during intracellular virion assembly by masking and inactivating envelope protein E fusion peptide. prM is the only viral peptide matured by host furin in the trans-Golgi network probably to avoid catastrophic activation of the viral fusion activity in acidic Golgi compartment prior to virion release. prM-E cleavage is inefficient, and many virions are only partially matured. These uncleaved prM would play a role in immune evasion. In terms of biological role, may play a role in virus budding. Exerts cytotoxic effects by activating a mitochondrial apoptotic pathway through M ectodomain. May display a viroporin activity. Functionally, binds to host cell surface receptor and mediates fusion between viral and cellular membranes. Envelope protein is synthesized in the endoplasmic reticulum in the form of heterodimer with protein prM. They play a role in virion budding in the ER, and the newly formed immature particle is covered with 60 spikes composed of heterodimer between precursor prM and envelope protein E. The virion is transported to the Golgi apparatus where the low pH causes dissociation of PrM-E heterodimers and formation of E homodimers. prM-E cleavage is inefficient, and many virions are only partially matured. These uncleaved prM would play a role in immune evasion. In Ardeidae (herons), this protein is Structural polyprotein.